We begin with the raw amino-acid sequence, 139 residues long: Nucleoside diphosphate kinase (139 aa).

Residues lysine 11, phenylalanine 59, arginine 87, threonine 93, arginine 104, and asparagine 114 each contribute to the ATP site. Histidine 117 acts as the Pros-phosphohistidine intermediate in catalysis.

It belongs to the NDK family. As to quaternary structure, homotetramer. Mg(2+) serves as cofactor.

It is found in the cytoplasm. It catalyses the reaction a 2'-deoxyribonucleoside 5'-diphosphate + ATP = a 2'-deoxyribonucleoside 5'-triphosphate + ADP. The catalysed reaction is a ribonucleoside 5'-diphosphate + ATP = a ribonucleoside 5'-triphosphate + ADP. In terms of biological role, major role in the synthesis of nucleoside triphosphates other than ATP. The ATP gamma phosphate is transferred to the NDP beta phosphate via a ping-pong mechanism, using a phosphorylated active-site intermediate. The polypeptide is Nucleoside diphosphate kinase (Flavobacterium johnsoniae (strain ATCC 17061 / DSM 2064 / JCM 8514 / BCRC 14874 / CCUG 350202 / NBRC 14942 / NCIMB 11054 / UW101) (Cytophaga johnsonae)).